We begin with the raw amino-acid sequence, 321 residues long: Putative ankyrin repeat domain-containing protein 26-like protein (321 aa).

ANK repeat units follow at residues 48–78 (KHLG…DLDE), 82–111 (KKRT…QLDV), 115–144 (KNRT…DPDL), 148–177 (YGNT…NIES), and 181–210 (DELT…NLTA). Disordered stretches follow at residues 222-242 (EYKE…GTSN) and 268-321 (FNKP…NENI). Residues 229 to 242 (PRNPQNSNPEGTSN) are compositionally biased toward polar residues.

The polypeptide is Putative ankyrin repeat domain-containing protein 26-like protein (ANKRD26P1) (Homo sapiens (Human)).